We begin with the raw amino-acid sequence, 230 residues long: Ribosomal RNA large subunit methyltransferase E (230 aa).

Residues Gly76, Trp78, Asp99, Asp115, and Asp139 each coordinate S-adenosyl-L-methionine. Catalysis depends on Lys179, which acts as the Proton acceptor.

Belongs to the class I-like SAM-binding methyltransferase superfamily. RNA methyltransferase RlmE family.

The protein localises to the cytoplasm. It carries out the reaction uridine(2552) in 23S rRNA + S-adenosyl-L-methionine = 2'-O-methyluridine(2552) in 23S rRNA + S-adenosyl-L-homocysteine + H(+). Functionally, specifically methylates the uridine in position 2552 of 23S rRNA at the 2'-O position of the ribose in the fully assembled 50S ribosomal subunit. The protein is Ribosomal RNA large subunit methyltransferase E of Nitrobacter winogradskyi (strain ATCC 25391 / DSM 10237 / CIP 104748 / NCIMB 11846 / Nb-255).